The primary structure comprises 407 residues: Probable succinyl-diaminopimelate desuccinylase (407 aa).

A Zn(2+)-binding site is contributed by histidine 72. Residue aspartate 74 is part of the active site. A Zn(2+)-binding site is contributed by aspartate 105. Glutamate 139 acts as the Proton acceptor in catalysis. Zn(2+)-binding residues include glutamate 140, glutamate 165, and histidine 378.

Belongs to the peptidase M20A family. It depends on Zn(2+) as a cofactor. Co(2+) is required as a cofactor.

It carries out the reaction N-succinyl-(2S,6S)-2,6-diaminopimelate + H2O = (2S,6S)-2,6-diaminopimelate + succinate. It functions in the pathway amino-acid biosynthesis; L-lysine biosynthesis via DAP pathway; LL-2,6-diaminopimelate from (S)-tetrahydrodipicolinate (succinylase route): step 3/3. This is Probable succinyl-diaminopimelate desuccinylase (dapE) from Staphylococcus aureus (strain MRSA252).